The primary structure comprises 416 residues: Serine hydroxymethyltransferase (416 aa).

(6S)-5,6,7,8-tetrahydrofolate contacts are provided by residues leucine 121 and 125-127 (GHL). The residue at position 229 (lysine 229) is an N6-(pyridoxal phosphate)lysine.

This sequence belongs to the SHMT family. Homodimer. Pyridoxal 5'-phosphate serves as cofactor.

The protein localises to the cytoplasm. The catalysed reaction is (6R)-5,10-methylene-5,6,7,8-tetrahydrofolate + glycine + H2O = (6S)-5,6,7,8-tetrahydrofolate + L-serine. It participates in one-carbon metabolism; tetrahydrofolate interconversion. The protein operates within amino-acid biosynthesis; glycine biosynthesis; glycine from L-serine: step 1/1. Its function is as follows. Catalyzes the reversible interconversion of serine and glycine with tetrahydrofolate (THF) serving as the one-carbon carrier. This reaction serves as the major source of one-carbon groups required for the biosynthesis of purines, thymidylate, methionine, and other important biomolecules. Also exhibits THF-independent aldolase activity toward beta-hydroxyamino acids, producing glycine and aldehydes, via a retro-aldol mechanism. In Neisseria meningitidis serogroup B (strain ATCC BAA-335 / MC58), this protein is Serine hydroxymethyltransferase.